The chain runs to 436 residues: Glutamyl-tRNA reductase (436 aa).

Substrate contacts are provided by residues threonine 49–arginine 52, serine 109, glutamate 114–glutamine 116, and glutamine 120. Residue cysteine 50 is the Nucleophile of the active site. Residue glycine 198–serine 203 participates in NADP(+) binding.

This sequence belongs to the glutamyl-tRNA reductase family. In terms of assembly, homodimer.

It catalyses the reaction (S)-4-amino-5-oxopentanoate + tRNA(Glu) + NADP(+) = L-glutamyl-tRNA(Glu) + NADPH + H(+). It functions in the pathway porphyrin-containing compound metabolism; protoporphyrin-IX biosynthesis; 5-aminolevulinate from L-glutamyl-tRNA(Glu): step 1/2. The protein operates within porphyrin-containing compound metabolism; chlorophyll biosynthesis. In terms of biological role, catalyzes the NADPH-dependent reduction of glutamyl-tRNA(Glu) to glutamate 1-semialdehyde (GSA). This is Glutamyl-tRNA reductase from Prochlorococcus marinus (strain MIT 9301).